Here is a 194-residue protein sequence, read N- to C-terminus: Small ribosomal subunit protein eS7 (194 aa).

The protein belongs to the eukaryotic ribosomal protein eS7 family.

The protein is Small ribosomal subunit protein eS7 (RpS7) of Drosophila melanogaster (Fruit fly).